Reading from the N-terminus, the 218-residue chain is Large ribosomal subunit protein uL3 (218 aa).

The protein belongs to the universal ribosomal protein uL3 family. Part of the 50S ribosomal subunit. Forms a cluster with proteins L14 and L19.

Functionally, one of the primary rRNA binding proteins, it binds directly near the 3'-end of the 23S rRNA, where it nucleates assembly of the 50S subunit. The sequence is that of Large ribosomal subunit protein uL3 from Corynebacterium diphtheriae (strain ATCC 700971 / NCTC 13129 / Biotype gravis).